The primary structure comprises 126 residues: uncharacterized protein (126 aa).

This is an uncharacterized protein from Xylella fastidiosa (strain 9a5c).